The primary structure comprises 156 residues: Calglandulin (156 aa).

EF-hand domains are found at residues 8 to 43, 44 to 79, 82 to 117, and 118 to 153; these read EQIT…IGIN, PTKR…YHEK, NQDE…AGEP, and LNEH…ESFK. Ca(2+) contacts are provided by D131, D133, D135, T137, and E142.

The protein belongs to the calmodulin family. Calglandulin subfamily. In terms of tissue distribution, expressed by the venom gland.

It is found in the cytoplasm. In terms of biological role, may be involved in the cellular control mechanism of the secretion of toxins from the gland into the venom. This is Calglandulin from Hoplocephalus stephensii (Stephens's banded snake).